The following is a 344-amino-acid chain: Arginase 2, chloroplastic/mitochondrial (344 aa).

A chloroplast and mitochondrion-targeting transit peptide spans 1–26 (MWKIGQRGVPYFQRLIAAPFTTLRSL). Residues H163, D187, H189, and D191 each contribute to the Mn(2+) site. Substrate is bound by residues 189 to 193 (HPDIY), 197 to 199 (EGN), and N228. Mn(2+) contacts are provided by D272 and D274. Substrate is bound at residue E315.

This sequence belongs to the arginase family. Requires Mn(2+) as cofactor. As to expression, expressed in vasculature of roots, root tips, leaves and cotyledons.

Its subcellular location is the mitochondrion. The protein resides in the plastid. It localises to the chloroplast. It catalyses the reaction L-arginine + H2O = urea + L-ornithine. The enzyme catalyses agmatine + H2O = urea + putrescine. It functions in the pathway nitrogen metabolism; urea cycle; L-ornithine and urea from L-arginine: step 1/1. Its pathway is amine and polyamine biosynthesis; putrescine biosynthesis via agmatine pathway; putrescine from agmatine: step 1/1. Its function is as follows. Catalyzes the hydrolysis of L-arginine to urea and L-ornithine. The latter can be utilized in the urea cycle or as a precursor for the synthesis of both polyamines and proline. Possesses agmatinase activity. Catalyzes the formation of putrescine from agmatine. The polypeptide is Arginase 2, chloroplastic/mitochondrial (ARGAH2) (Arabidopsis thaliana (Mouse-ear cress)).